We begin with the raw amino-acid sequence, 537 residues long: Tyrosine-protein phosphatase CDC14 homolog (537 aa).

Residues 182 to 345 form the Tyrosine-protein phosphatase domain; that stretch reads DFNWISPKFI…QVHFRAYFYE (164 aa). Cys-286 serves as the catalytic Phosphocysteine intermediate. A disordered region spans residues 359-537; that stretch reads EPLATPPRHP…PKPSKSRLIS (179 aa). The span at 370–382 shows a compositional bias: polar residues; the sequence is NATNGTSQSNIST. Residues 400-411 show a composition bias toward low complexity; that stretch reads PPSARRLPSASS. Residues 421 to 437 are compositionally biased toward polar residues; it reads ASKQSIQNENKASYSSY. Thr-453 carries the post-translational modification Phosphothreonine. Phosphoserine is present on residues Ser-468 and Ser-470. Low complexity predominate over residues 490-502; that stretch reads RRTSGNRWSSGSS. Ser-513 bears the Phosphoserine mark. The span at 514 to 523 shows a compositional bias: polar residues; it reads MSSLNNTSNG. A compositionally biased stretch (basic residues) spans 526-537; the sequence is AKPKPSKSRLIS.

The protein belongs to the protein-tyrosine phosphatase family. Non-receptor class CDC14 subfamily. In terms of assembly, interacts with ark1 at the kinetochores. Interacts with bir1, cdc25, mid1, nbl1, pic1, and rad24. Post-translationally, phosphorylated by cds1, chk1, pmk1, and cdc2 upon Hydroxylurea and H(2)O(2) stress treatment. Phosphorylation regulates the nucleolar-to-nucleoplasmic transition. Is able to autodephosphorylate.

The protein resides in the nucleus. It is found in the nucleolus. The protein localises to the cytoplasm. It localises to the cytoskeleton. Its subcellular location is the microtubule organizing center. The protein resides in the spindle pole body. It carries out the reaction O-phospho-L-tyrosyl-[protein] + H2O = L-tyrosyl-[protein] + phosphate. Functionally, protein phosphatase which antagonizes mitotic cyclin-dependent kinase cdc2, the inactivation of which is essential for exit from mitosis. To access its substrates, is released from nucleolar sequestration during mitosis. Plays an essential in coordinating the nuclear division cycle with cytokinesis through the cytokinesis checkpoint. Involved in chromosome segregation, where it is required for meiosis I spindle dissambly as well as for establishing two consecutive chromosome segregation phases. Allows damaged actomyosin rings to be maintained to facilitate completion of cell division in response to minor perturbation of the cell division machinery. Dephosphorylates the mitotic inducer cdc25 for its rapid degradation. Down-regulation of cdc25 activity ensures a prompt inactivation of mitotic cdc2 complexes to trigger cell division. Also dephosphorylates cdc2-phosphorylated nsk1, allowing nsk1-binding to kinetochores and spindle. Dephosphorylates ase1, which is essential for spindle midzone assembly and for continuous extension of the anaphase spindle. Tethered to the contractile ring by mid1, where it dephosphorylates cdc15. The polypeptide is Tyrosine-protein phosphatase CDC14 homolog (clp1) (Schizosaccharomyces pombe (strain 972 / ATCC 24843) (Fission yeast)).